The primary structure comprises 910 residues: E3 ubiquitin-protein ligase HUL5 (910 aa).

Met-1 carries the N-acetylmethionine modification. Residues 1–25 are disordered; sequence MLNFTGQTRRRNVNLGNRTRNSKKD. One can recognise an HECT domain in the interval 810–910; it reads YGGYKEEDQT…INSGARFDLS (101 aa). The Glycyl thioester intermediate role is filled by Cys-878.

This sequence belongs to the UBE3C family. As to quaternary structure, interacts with 19S proteasomes.

It localises to the cytoplasm. Its subcellular location is the cytosol. It is found in the nucleus. The catalysed reaction is S-ubiquitinyl-[E2 ubiquitin-conjugating enzyme]-L-cysteine + [acceptor protein]-L-lysine = [E2 ubiquitin-conjugating enzyme]-L-cysteine + N(6)-ubiquitinyl-[acceptor protein]-L-lysine.. It functions in the pathway protein modification; protein ubiquitination. In terms of biological role, non-essential E3 ubiquitin-protein ligase that specifically catalyzes 'Lys-29'- and 'Lys-48'-linked polyubiquitin chains. Accepts ubiquitin from an E2 ubiquitin-conjugating enzyme in the form of a thioester and then directly transfers the ubiquitin to targeted substrates. Associates with the proteasome and promotes elongation of ubiquitin chains on substrates bound to the proteasome. Elongation of ubiquitin chains on substrates bound to the proteasome promotes proteasomal processivity. Also promotes ubiquitin elongation of 26S proteasome subunit RPN10. Involved in the stress response required to maintain cell fitness following heat-shock: acts by mediating ubiquitination of cytosolic misfolded proteins, leading to their subsequent degradation. This Saccharomyces cerevisiae (strain ATCC 204508 / S288c) (Baker's yeast) protein is E3 ubiquitin-protein ligase HUL5.